Consider the following 404-residue polypeptide: Glycosylated lysosomal membrane protein B (404 aa).

A signal peptide spans 1–24 (MSCTRGWRLILLGLLCVGLLGTRG). At 25–364 (QDESRKVSVQ…YGDPPRDSFS (340 aa)) the chain is on the lumenal side. 15 N-linked (GlcNAc...) asparagine glycosylation sites follow: N85, N124, N128, N142, N152, N156, N163, N168, N178, N189, N205, N221, N266, N303, and N330. Residues 365-385 (ILVICIMAVALGTPLLLLIIG) form a helical membrane-spanning segment. Topologically, residues 386–404 (TVLVTAVRHKVYPNYQPIN) are cytoplasmic. The Lysosomal targeting motif signature appears at 400 to 404 (YQPIN).

It belongs to the GLMP family. As to quaternary structure, interacts (via lumenal domain) with lysosomal protein MFSD1; the interaction starts while both proteins are still in the endoplasmic reticulum and is required for stabilization of MFSD1 in lysosomes but has no direct effect on its targeting to lysosomes or transporter activity.

It localises to the lysosome membrane. Required to protect lysosomal transporter MFSD1 from lysosomal proteolysis and for MFSD1 lysosomal localization. This Xenopus laevis (African clawed frog) protein is Glycosylated lysosomal membrane protein B (glmp-b).